Reading from the N-terminus, the 336-residue chain is Potassium channel subfamily K member 1 (336 aa).

The Cytoplasmic segment spans residues 1 to 20; it reads MLQSLAGSSCVRLVERHRSA. The helical transmembrane segment at 21–41 threads the bilayer; sequence WCFGLLVLGYLLYLVFGAVVF. The Extracellular portion of the chain corresponds to 42-103; that stretch reads SSVELPYEDL…SNASGNWNWD (62 aa). Asparagine 95 carries N-linked (GlcNAc...) asparagine glycosylation. An intramembrane region (helical) is located at residues 104-116; that stretch reads FTSALFFASTVLS. Residues 117 to 122 lie within the membrane without spanning it; it reads TTGYGH. Positions 117 to 122 are selectivity filter 1; it reads TTGYGH. Topologically, residues 123-132 are extracellular; sequence TVPLSDGGKA. The helical transmembrane segment at 133-156 threads the bilayer; the sequence is FCIIYSVIGIPFTLLFLTAVVQRI. The Cytoplasmic segment spans residues 157 to 181; the sequence is TVHVTRRPVLYFHIRWGFSKQMVGI. The chain crosses the membrane as a helical span at residues 182–202; it reads VHAVVLGFVTVSCFFFIPAAV. The Extracellular segment spans residues 203 to 211; it reads FSVLEDDWN. The segment at residues 212–224 is an intramembrane region (helical); that stretch reads FLESFYFCFISLS. Residues 225–230 are selectivity filter 2; sequence TIGLGD. An intramembrane segment occupies 225-231; the sequence is TIGLGDY. The Extracellular segment spans residues 232 to 243; sequence VPGEGYNQKFRE. The chain crosses the membrane as a helical span at residues 244-267; that stretch reads LYKIGITCYLLLGLIAMLVVLETF. Residues 268-336 lie on the Cytoplasmic side of the membrane; sequence CELHELKKFR…SAYAEDSASH (69 aa). Residue lysine 274 forms a Glycyl lysine isopeptide (Lys-Gly) (interchain with G-Cter in SUMO) linkage. An important for intracellular retention in recycling endosomes region spans residues 293-299; the sequence is IVEHDQL.

The protein belongs to the two pore domain potassium channel (TC 1.A.1.8) family. Homodimer; disulfide-linked. Heterodimer with KCNK2; disulfide-linked. In astrocytes, forms mostly heterodimeric potassium channels with KCNK2, with only a minor proportion of functional channels containing homodimeric KCNK1. Interacts with KCNK3 and KCNK9, forming functional heterodimeric channels. Interacts with GNG4. Identified in a complex with PSD and ARF6; interacts only with PSD that is bound to ARF6. Interacts with UBE2I. Sumoylation is controversial. Sumoylated by UBE2I. Not sumoylated when expressed in xenopus oocytes or mammalian cells. Sumoylation inactivates the channel, but does not interfere with expression at the cell membrane. Sumoylation of a single subunit is sufficient to silence the dimeric channel. Sumoylation of KCNK1 is sufficient to silence heterodimeric channels formed by KCNK1 and KCNK3 or KCNK9. Desumoylated by SENP1; this activates the channel. Desumoylated by SENP1; this strongly increases halothane-mediated activation of heterodimeric channels formed with KCNK9. SENP1 treatment has no effect.

The protein resides in the cell membrane. Its subcellular location is the recycling endosome. The protein localises to the synaptic cell membrane. It is found in the cytoplasmic vesicle. It localises to the perikaryon. The protein resides in the cell projection. Its subcellular location is the dendrite. The protein localises to the apical cell membrane. The catalysed reaction is K(+)(in) = K(+)(out). It carries out the reaction NH4(+)(in) = NH4(+)(out). It catalyses the reaction Na(+)(in) = Na(+)(out). The enzyme catalyses Rb(+)(in) = Rb(+)(out). The catalysed reaction is Cs(+)(in) = Cs(+)(out). It carries out the reaction Li(+)(in) = Li(+)(out). It catalyses the reaction L-glutamate(out) = L-glutamate(in). The enzyme catalyses chloride(in) = chloride(out). Ion channel that contributes to passive transmembrane potassium transport and to the regulation of the resting membrane potential in brain astrocytes, but also in kidney and in other tissues. Forms dimeric channels through which potassium ions pass in accordance with their electrochemical gradient. The channel is selective for K(+) ions at physiological potassium concentrations and at neutral pH, but becomes permeable to Na(+) at subphysiological K(+) levels and upon acidification of the extracellular medium. The homodimer has very low potassium channel activity, when expressed in heterologous systems, and can function as weakly inward rectifying potassium channel. Channel activity is modulated by activation of serotonin receptors. Heterodimeric channels containing KCNK1 and KCNK2 have much higher activity, and may represent the predominant form in astrocytes. Heterodimeric channels containing KCNK1 and KCNK3 or KCNK9 have much higher activity. Heterodimeric channels formed by KCNK1 and KCNK9 may contribute to halothane-sensitive currents. Mediates outward rectifying potassium currents in dentate gyrus granule cells and contributes to the regulation of their resting membrane potential. Contributes to the regulation of action potential firing in dentate gyrus granule cells and down-regulates their intrinsic excitability. In astrocytes, the heterodimer formed by KCNK1 and KCNK2 is required for rapid glutamate release in response to activation of G-protein coupled receptors, such as F2R and CNR1. Required for normal ion and water transport in the kidney. Contributes to the regulation of the resting membrane potential of pancreatic beta cells. The low channel activity of homodimeric KCNK1 may be due to sumoylation. The low channel activity may be due to rapid internalization from the cell membrane and retention in recycling endosomes. Permeable to monovalent cations with ion selectivity for K(+) &gt; Rb(+) &gt;&gt; NH4(+) &gt;&gt; Cs(+) = Na(+) = Li(+). The protein is Potassium channel subfamily K member 1 of Cavia porcellus (Guinea pig).